The sequence spans 114 residues: Peroxisomal biogenesis factor 39 (114 aa).

Disordered stretches follow at residues 1 to 26 (MSWW…AEPA) and 53 to 114 (ITAT…PRVS). The residue at position 102 (Ser102) is a Phosphoserine.

It is found in the peroxisome. In terms of biological role, may be a peroxin involved in the PTS2-mediated protein import pathway. In Mus musculus (Mouse), this protein is Peroxisomal biogenesis factor 39 (Pex39).